A 330-amino-acid polypeptide reads, in one-letter code: Glycerol-3-phosphate dehydrogenase [NAD(P)+] (330 aa).

4 residues coordinate NADPH: Ser11, Phe12, Arg32, and Lys106. Sn-glycerol 3-phosphate is bound by residues Lys106, Gly133, and Ser135. Ala137 contacts NADPH. Sn-glycerol 3-phosphate contacts are provided by Lys188, Asp241, Ser251, Arg252, and Asn253. The active-site Proton acceptor is Lys188. Arg252 is a binding site for NADPH. Positions 276 and 278 each coordinate NADPH.

The protein belongs to the NAD-dependent glycerol-3-phosphate dehydrogenase family.

The protein localises to the cytoplasm. The enzyme catalyses sn-glycerol 3-phosphate + NAD(+) = dihydroxyacetone phosphate + NADH + H(+). It catalyses the reaction sn-glycerol 3-phosphate + NADP(+) = dihydroxyacetone phosphate + NADPH + H(+). It functions in the pathway membrane lipid metabolism; glycerophospholipid metabolism. In terms of biological role, catalyzes the reduction of the glycolytic intermediate dihydroxyacetone phosphate (DHAP) to sn-glycerol 3-phosphate (G3P), the key precursor for phospholipid synthesis. The sequence is that of Glycerol-3-phosphate dehydrogenase [NAD(P)+] from Clostridium botulinum (strain Eklund 17B / Type B).